Here is a 338-residue protein sequence, read N- to C-terminus: Ornithine carbamoyltransferase, catabolic (338 aa).

Carbamoyl phosphate-binding positions include 58–61 (STRT), glutamine 85, arginine 109, and 136–139 (HPTQ). L-ornithine is bound by residues asparagine 168, aspartate 232, and 236–237 (SM). Carbamoyl phosphate-binding positions include 273–274 (CL) and arginine 318.

The protein belongs to the aspartate/ornithine carbamoyltransferase superfamily. OTCase family.

It localises to the cytoplasm. The enzyme catalyses carbamoyl phosphate + L-ornithine = L-citrulline + phosphate + H(+). It functions in the pathway amino-acid degradation; L-arginine degradation via ADI pathway; carbamoyl phosphate from L-arginine: step 2/2. Functionally, reversibly catalyzes the transfer of the carbamoyl group from carbamoyl phosphate (CP) to the N(epsilon) atom of ornithine (ORN) to produce L-citrulline. This Streptococcus pneumoniae serotype 4 (strain ATCC BAA-334 / TIGR4) protein is Ornithine carbamoyltransferase, catabolic.